A 502-amino-acid polypeptide reads, in one-letter code: Glycerol kinase (502 aa).

An ADP-binding site is contributed by threonine 14. Residues threonine 14, threonine 15, and serine 16 each contribute to the ATP site. Residue threonine 14 participates in sn-glycerol 3-phosphate binding. Arginine 18 lines the ADP pocket. Positions 84, 85, and 136 each coordinate sn-glycerol 3-phosphate. Residues arginine 84, glutamate 85, and tyrosine 136 each contribute to the glycerol site. Histidine 232 carries the post-translational modification Phosphohistidine; by HPr. Position 246 (aspartate 246) interacts with sn-glycerol 3-phosphate. Glycerol is bound by residues aspartate 246 and glutamine 247. ADP-binding residues include threonine 268 and glycine 311. Threonine 268, glycine 311, glutamine 315, and glycine 412 together coordinate ATP. Glycine 412 and asparagine 416 together coordinate ADP.

The protein belongs to the FGGY kinase family. In terms of assembly, homotetramer and homodimer (in equilibrium). The phosphoenolpyruvate-dependent sugar phosphotransferase system (PTS), including enzyme I, and histidine-containing protein (HPr) are required for the phosphorylation, which leads to the activation of the enzyme.

It catalyses the reaction glycerol + ATP = sn-glycerol 3-phosphate + ADP + H(+). It functions in the pathway polyol metabolism; glycerol degradation via glycerol kinase pathway; sn-glycerol 3-phosphate from glycerol: step 1/1. Activated by phosphorylation and inhibited by fructose 1,6-bisphosphate (FBP). Its function is as follows. Key enzyme in the regulation of glycerol uptake and metabolism. Catalyzes the phosphorylation of glycerol to yield sn-glycerol 3-phosphate. The protein is Glycerol kinase of Streptococcus pneumoniae (strain Hungary19A-6).